A 351-amino-acid polypeptide reads, in one-letter code: Vacuolar protein sorting-associated protein 72 homolog (351 aa).

The segment at methionine 1 to serine 136 is disordered. Over residues glutamine 36–glutamate 72 the composition is skewed to acidic residues. Phosphoserine is present on residues serine 56, serine 59, and serine 68. Positions alanine 87–lysine 100 are enriched in basic and acidic residues. The span at leucine 105 to proline 121 shows a compositional bias: basic residues. Residues glutamine 142–serine 202 are a coiled coil. The DNA-binding element occupies lysine 156–threonine 208.

The protein belongs to the VPS72/YL1 family. In terms of assembly, interacts with H2AV. Component of the Tip60 chromatin-remodeling complex which contains the catalytic subunit Tip60 and the subunits Domino, Tra1, Brd8, E(Pc), DMAP1, Pontin, Reptin, Ing3, Act87E, BAP55, Mrg15, MrgBP, Gas41 and YL-1.

The protein localises to the nucleus. Functionally, part of the Tip60 chromatin-remodeling complex which is involved in DNA repair. Upon induction of DNA double-strand breaks, this complex acetylates phosphorylated H2AV in nucleosomes and exchanges it with unmodified H2AV. The protein is Vacuolar protein sorting-associated protein 72 homolog (YL-1) of Drosophila melanogaster (Fruit fly).